The chain runs to 1051 residues: Carbamoyl phosphate synthase large chain (1051 aa).

The tract at residues 1–399 is carboxyphosphate synthetic domain; that stretch reads MRETPKKVLV…SLQKAIRMLD (399 aa). ATP contacts are provided by Arg127, Arg167, Gly173, Gly174, Lys206, Leu208, Glu213, Gly239, Val240, His241, Gln282, and Glu296. In terms of domain architecture, ATP-grasp 1 spans 131-325; the sequence is RETMIENNLP…LAYVSAKLAL (195 aa). The Mg(2+) site is built by Gln282, Glu296, and Asn298. Mn(2+)-binding residues include Gln282, Glu296, and Asn298. Positions 400 to 548 are oligomerization domain; sequence IGEPGVVGGK…LTYNGTEDDI (149 aa). The carbamoyl phosphate synthetic domain stretch occupies residues 549–930; it reads EFSQGNKLLI…LKSWLSSMPN (382 aa). In terms of domain architecture, ATP-grasp 2 spans 673-863; that stretch reads SKLLDKLGIS…LINESMKAIF (191 aa). Positions 709, 748, 750, 755, 779, 780, 781, 782, 822, and 834 each coordinate ATP. Gln822, Glu834, and Asn836 together coordinate Mg(2+). Mn(2+)-binding residues include Gln822, Glu834, and Asn836. In terms of domain architecture, MGS-like spans 930–1051; it reads NRIPNKNGIA…FEISEYGGGI (122 aa). An allosteric domain region spans residues 931-1051; the sequence is RIPNKNGIAL…FEISEYGGGI (121 aa).

It belongs to the CarB family. Composed of two chains; the small (or glutamine) chain promotes the hydrolysis of glutamine to ammonia, which is used by the large (or ammonia) chain to synthesize carbamoyl phosphate. Tetramer of heterodimers (alpha,beta)4. The cofactor is Mg(2+). Mn(2+) is required as a cofactor.

It catalyses the reaction hydrogencarbonate + L-glutamine + 2 ATP + H2O = carbamoyl phosphate + L-glutamate + 2 ADP + phosphate + 2 H(+). The enzyme catalyses hydrogencarbonate + NH4(+) + 2 ATP = carbamoyl phosphate + 2 ADP + phosphate + 2 H(+). It participates in amino-acid biosynthesis; L-arginine biosynthesis; carbamoyl phosphate from bicarbonate: step 1/1. Its pathway is pyrimidine metabolism; UMP biosynthesis via de novo pathway; (S)-dihydroorotate from bicarbonate: step 1/3. Large subunit of the glutamine-dependent carbamoyl phosphate synthetase (CPSase). CPSase catalyzes the formation of carbamoyl phosphate from the ammonia moiety of glutamine, carbonate, and phosphate donated by ATP, constituting the first step of 2 biosynthetic pathways, one leading to arginine and/or urea and the other to pyrimidine nucleotides. The large subunit (synthetase) binds the substrates ammonia (free or transferred from glutamine from the small subunit), hydrogencarbonate and ATP and carries out an ATP-coupled ligase reaction, activating hydrogencarbonate by forming carboxy phosphate which reacts with ammonia to form carbamoyl phosphate. The chain is Carbamoyl phosphate synthase large chain from Saccharolobus solfataricus (strain ATCC 35092 / DSM 1617 / JCM 11322 / P2) (Sulfolobus solfataricus).